A 206-amino-acid chain; its full sequence is LexA repressor (206 aa).

A DNA-binding region (H-T-H motif) is located at residues 28-48 (RAEIARRLGFKSANAAEEHLK). Residues S123 and K160 each act as for autocatalytic cleavage activity in the active site.

It belongs to the peptidase S24 family. As to quaternary structure, homodimer.

It catalyses the reaction Hydrolysis of Ala-|-Gly bond in repressor LexA.. Functionally, represses a number of genes involved in the response to DNA damage (SOS response), including recA and lexA. In the presence of single-stranded DNA, RecA interacts with LexA causing an autocatalytic cleavage which disrupts the DNA-binding part of LexA, leading to derepression of the SOS regulon and eventually DNA repair. This Shewanella piezotolerans (strain WP3 / JCM 13877) protein is LexA repressor.